We begin with the raw amino-acid sequence, 407 residues long: Phosphopentomutase (407 aa).

Mn(2+) is bound by residues aspartate 10, aspartate 306, histidine 311, aspartate 347, histidine 348, and histidine 359.

It belongs to the phosphopentomutase family. Requires Mn(2+) as cofactor.

It localises to the cytoplasm. The catalysed reaction is 2-deoxy-alpha-D-ribose 1-phosphate = 2-deoxy-D-ribose 5-phosphate. It carries out the reaction alpha-D-ribose 1-phosphate = D-ribose 5-phosphate. Its pathway is carbohydrate degradation; 2-deoxy-D-ribose 1-phosphate degradation; D-glyceraldehyde 3-phosphate and acetaldehyde from 2-deoxy-alpha-D-ribose 1-phosphate: step 1/2. Functionally, isomerase that catalyzes the conversion of deoxy-ribose 1-phosphate (dRib-1-P) and ribose 1-phosphate (Rib-1-P) to deoxy-ribose 5-phosphate (dRib-5-P) and ribose 5-phosphate (Rib-5-P), respectively. The protein is Phosphopentomutase of Buchnera aphidicola subsp. Acyrthosiphon pisum (strain APS) (Acyrthosiphon pisum symbiotic bacterium).